We begin with the raw amino-acid sequence, 1057 residues long: Histone deacetylase complex subunit SAP130 (1057 aa).

Disordered stretches follow at residues 1 to 68 (MSSQ…EEKQ), 289 to 314 (TLSR…PAQP), 556 to 594 (GIQP…DTKT), 624 to 692 (QTHS…KPKP), and 827 to 880 (NLSM…VKAE). Positions 41-54 (ESVRDPEVAPRDQH) are enriched in basic and acidic residues. Polar residues predominate over residues 289 to 301 (TLSRPTLSIQQHP). 2 stretches are compositionally biased toward low complexity: residues 579–590 (QPAPISAQQPQA) and 624–642 (QTHS…PRPS). Polar residues predominate over residues 671 to 682 (RVENTMRSTSGS).

The protein belongs to the SAP130 family. Component of a mSin3A corepressor complex that contains SIN3A, SAP130, SUDS3/SAP45, ARID4B/SAP180, HDAC1 and HDAC2.

It is found in the nucleus. Functionally, acts as a transcriptional repressor. May function in the assembly and/or enzymatic activity of the mSin3A corepressor complex or in mediating interactions between the complex and other regulatory complexes. In Gallus gallus (Chicken), this protein is Histone deacetylase complex subunit SAP130 (SAP130).